Here is a 240-residue protein sequence, read N- to C-terminus: Probable hydroxyacylglutathione hydrolase (240 aa).

Residues His-33, His-35, Asp-37, His-38, His-95, and Asp-119 each coordinate Zn(2+). Residues Arg-128, 158–160 (HEY), and 234–237 (REEK) each bind substrate. His-158 is a Zn(2+) binding site.

The protein belongs to the metallo-beta-lactamase superfamily. Glyoxalase II family. The cofactor is Zn(2+).

The enzyme catalyses an S-(2-hydroxyacyl)glutathione + H2O = a 2-hydroxy carboxylate + glutathione + H(+). It functions in the pathway secondary metabolite metabolism; methylglyoxal degradation; (R)-lactate from methylglyoxal: step 2/2. In terms of biological role, thiolesterase that catalyzes the hydrolysis of S-D-lactoyl-glutathione to form glutathione and D-lactic acid. In Schistosoma mansoni (Blood fluke), this protein is Probable hydroxyacylglutathione hydrolase.